Reading from the N-terminus, the 289-residue chain is MDDKSMARGRKAFFTGFPIRHSRSPLIHGFWLKEQGIDGSYEAVEVKPEDFSSFAASLAANGFAGGNVTIPHKEAAYAAAESLDEAARAIGAVNTLWLENGRLCGGNTDAYGFAANLDASAPGWDKADRALVLGAGGASRAVVHALLSRGVCHVSVVNRTLSRAEELAAHFGARVYAHGWDEAQALVSNAGLIVNTTALGMSGHGEGQDFPIDLTCAPKEAVATDIVYVPLRTAFLNKAEKAGLKTVDGLGMLLHQAVPGFERWFGQRPQVTQALREHILADMAKAGAL.

Residues 22-24 and Thr69 each bind shikimate; that span reads SRS. Lys73 functions as the Proton acceptor in the catalytic mechanism. Glu85 contacts NADP(+). Asn94 and Asp109 together coordinate shikimate. NADP(+) is bound by residues 134-138, 158-163, and Ile226; these read GAGGA and NRTLSR. Tyr228 is a shikimate binding site. Position 249 (Gly249) interacts with NADP(+).

The protein belongs to the shikimate dehydrogenase family. Homodimer.

It catalyses the reaction shikimate + NADP(+) = 3-dehydroshikimate + NADPH + H(+). It participates in metabolic intermediate biosynthesis; chorismate biosynthesis; chorismate from D-erythrose 4-phosphate and phosphoenolpyruvate: step 4/7. In terms of biological role, involved in the biosynthesis of the chorismate, which leads to the biosynthesis of aromatic amino acids. Catalyzes the reversible NADPH linked reduction of 3-dehydroshikimate (DHSA) to yield shikimate (SA). The protein is Shikimate dehydrogenase (NADP(+)) of Brucella ovis (strain ATCC 25840 / 63/290 / NCTC 10512).